The sequence spans 144 residues: Ribosomal RNA large subunit methyltransferase H (144 aa).

S-adenosyl-L-methionine-binding positions include L63, G92, and 111-116 (LSAMTL).

It belongs to the RNA methyltransferase RlmH family. In terms of assembly, homodimer.

The protein resides in the cytoplasm. The catalysed reaction is pseudouridine(1915) in 23S rRNA + S-adenosyl-L-methionine = N(3)-methylpseudouridine(1915) in 23S rRNA + S-adenosyl-L-homocysteine + H(+). Functionally, specifically methylates the pseudouridine at position 1915 (m3Psi1915) in 23S rRNA. The polypeptide is Ribosomal RNA large subunit methyltransferase H (Prochlorococcus marinus (strain MIT 9313)).